A 454-amino-acid chain; its full sequence is Mitochondrial dynamics protein MID49 (454 aa).

Topologically, residues 1 to 22 are mitochondrial intermembrane; it reads MAEFSQKRGKRRGDEGLGSMVD. Residues 23 to 43 form a helical membrane-spanning segment; sequence FLLANARLVLGVGGAAVLGIA. Topologically, residues 44–454 are cytoplasmic; the sequence is TLAVKRFIDR…SGLQEPEGLL (411 aa). The disordered stretch occupies residues 76–119; that stretch reads ATPHLQPRPPPAALSQPVLPLAPSSSAPEGPAKSDPEVTPQLSS. Residues 88–108 are compositionally biased toward low complexity; that stretch reads ALSQPVLPLAPSSSAPEGPAK.

This sequence belongs to the MID49/MID51 family. As to quaternary structure, interacts with DNM1L.

The protein localises to the mitochondrion outer membrane. Mitochondrial outer membrane protein which regulates mitochondrial organization. It is required for mitochondrial fission and promotes the recruitment and association of the fission mediator dynamin-related protein 1 (DNM1L) to the mitochondrial surface independently of the mitochondrial fission FIS1 and MFF proteins. Regulates DNM1L GTPase activity. The chain is Mitochondrial dynamics protein MID49 (MIEF2) from Pongo abelii (Sumatran orangutan).